Reading from the N-terminus, the 461-residue chain is Lysosomal proton-coupled steroid conjugate and bile acid symporter SLC46A3 (461 aa).

The N-terminal stretch at 1–25 is a signal peptide; that stretch reads MKISFIEPAILLYAFAMTLTIPLTA. Topologically, residues 26–70 are extracellular; the sequence is QYVYRRIWEETGNYTFTSSSNVSECEQNKSSSTFAFQEEVQKKAS. Asn38, Asn46, and Asn53 each carry an N-linked (GlcNAc...) asparagine glycan. Residues 71–91 traverse the membrane as a helical segment; that stretch reads LFSLQVEISGLIPGLVSTFML. Over 92–103 the chain is Cytoplasmic; sequence LSSSDNHGRKLP. Residues 104-124 traverse the membrane as a helical segment; sequence MVLSSLGSLGTNLWLCAMSYF. Topologically, residues 125–135 are extracellular; that stretch reads DLPLQLLVAST. A helical transmembrane segment spans residues 136–156; that stretch reads FIGALFGNYTTFWGACFAYIV. Over 157–170 the chain is Cytoplasmic; it reads DQEKEYKHRIIRIA. Residues 171 to 191 form a helical membrane-spanning segment; sequence VLDFMLGVVTGLTGLSSGYFI. Over 192–197 the chain is Extracellular; that stretch reads RELGFA. The helical transmembrane segment at 198–218 threads the bilayer; it reads WSYFIIAVVVLVNLAYILFFL. The Cytoplasmic portion of the chain corresponds to 219-260; that stretch reads SDPIKESSSQIVTMSCSESLKDLFYRTYMLFKNGSCKRRSLL. A helical membrane pass occupies residues 261-281; the sequence is CLLIFTLVVYFFVVFGITPVF. Topologically, residues 282–301 are extracellular; that stretch reads TLYELGPPLCWNEVYIGYGS. The helical transmembrane segment at 302–322 threads the bilayer; it reads ALGSLSFLSSFLGIWLFSYCL. The Cytoplasmic portion of the chain corresponds to 323–324; that stretch reads KD. The helical transmembrane segment at 325–345 threads the bilayer; that stretch reads IHIAYVGIFTTMVGMMLTAFT. Residues 346 to 347 are Extracellular-facing; sequence RT. Residues 348–368 form a helical membrane-spanning segment; that stretch reads TLMMFLVRISFFFTIMPLSIL. Topologically, residues 369-381 are cytoplasmic; that stretch reads RSMLSKVVHSTEQ. Residues 382-402 traverse the membrane as a helical segment; that stretch reads GVLFACIAFLETLGGVTSTSA. Over 403 to 415 the chain is Extracellular; sequence YNGIYSATVAWYP. A helical transmembrane segment spans residues 416-436; it reads GFVFLLSAGLLVLPAVSLCMV. At 437 to 461 the chain is on the cytoplasmic side; sequence KCIGWEEGSYTLLIHDEPSEHTSDS. The Tyrosine-based lysosomal-sorting motif motif lies at 446 to 449; sequence YTLL.

Belongs to the major facilitator superfamily. SLC46A family.

It is found in the lysosome membrane. The catalysed reaction is estrone 3-sulfate(out) + n H(+)(out) = estrone 3-sulfate(in) + n H(+)(in). It carries out the reaction 25-hydroxyvitamin D3 sulfate(out) + n H(+)(out) = 25-hydroxyvitamin D3 sulfate(in) + n H(+)(in). The enzyme catalyses cholate(out) + n H(+)(out) = cholate(in) + n H(+)(in). It catalyses the reaction glycocholate(out) + n H(+)(out) = glycocholate(in) + n H(+)(in). The catalysed reaction is taurocholate(out) + n H(+)(out) = taurocholate(in) + n H(+)(in). It carries out the reaction dehydroepiandrosterone 3-sulfate(out) + n H(+)(out) = dehydroepiandrosterone 3-sulfate(in) + n H(+)(in). The enzyme catalyses N-acetyl-D-muramoyl-L-alanyl-D-isoglutamine(out) + n H(+)(out) = N-acetyl-D-muramoyl-L-alanyl-D-isoglutamine(in) + n H(+)(in). It catalyses the reaction 2',3'-cGAMP(out) + n H(+)(out) = 2',3'-cGAMP(in) + n H(+)(in). Lysosomal proton-coupled steroid conjugate and bile acid transporter. Preferentially recognizes lipophilic steroid conjugates or bile acis as endogenous substrates and seems to mediate escape from lysosomes to the cytoplasm. Modulates hepatic cytosolic copper homeostasis, maybe acting as a lysosomal copper transporter and sequestering copper ions in the lysosome. Delivers pathogen-associated molecular patterns to cytosolic pattern recognition receptors as part of the innate immune response to microbes. Selectively transports bacterial muramyl dipeptide (MDP) into the cytosol for recognition by NOD2, triggering inflammatory responses. Likely acts as a redundant importer of cyclic GMP-AMP dinucleotides (cGAMPs) in monocyte and macrophage cell lineages. The transport mechanism, its electrogenicity and stoichiometry remain to be elucidated. This is Lysosomal proton-coupled steroid conjugate and bile acid symporter SLC46A3 (Slc46a3) from Rattus norvegicus (Rat).